A 494-amino-acid polypeptide reads, in one-letter code: Alpha-amylase A (494 aa).

The N-terminal stretch at 1–18 (MFLAKSLVCLALLAVANA) is a signal peptide. Glutamine 19 bears the Pyrrolidone carboxylic acid mark. A disulfide bridge links cysteine 46 with cysteine 102. Ca(2+) is bound by residues asparagine 116, arginine 165, and aspartate 174. Residues cysteine 153 and cysteine 167 are joined by a disulfide bond. Arginine 202 is a binding site for chloride. Aspartate 204 serves as the catalytic Nucleophile. Ca(2+) is bound at residue histidine 208. Glutamate 241 (proton donor) is an active-site residue. Chloride is bound by residues asparagine 304 and arginine 343. Disulfide bonds link cysteine 376–cysteine 382 and cysteine 448–cysteine 460.

This sequence belongs to the glycosyl hydrolase 13 family. Monomer. Requires Ca(2+) as cofactor. The cofactor is chloride.

It carries out the reaction Endohydrolysis of (1-&gt;4)-alpha-D-glucosidic linkages in polysaccharides containing three or more (1-&gt;4)-alpha-linked D-glucose units.. This chain is Alpha-amylase A (Amy-d), found in Drosophila mauritiana (Fruit fly).